The sequence spans 322 residues: Lipoyl synthase (322 aa).

Positions 1 to 25 (MSQRITIDHRSAPALRHPEKAHRPD) are enriched in basic and acidic residues. The segment at 1–29 (MSQRITIDHRSAPALRHPEKAHRPDNPIQ) is disordered. The [4Fe-4S] cluster site is built by Cys-61, Cys-66, Cys-72, Cys-87, Cys-91, Cys-94, and Ser-300. The Radical SAM core domain occupies 73-289 (WSQRHATMMI…AAAARSKGFL (217 aa)).

This sequence belongs to the radical SAM superfamily. Lipoyl synthase family. [4Fe-4S] cluster is required as a cofactor.

Its subcellular location is the cytoplasm. It carries out the reaction [[Fe-S] cluster scaffold protein carrying a second [4Fe-4S](2+) cluster] + N(6)-octanoyl-L-lysyl-[protein] + 2 oxidized [2Fe-2S]-[ferredoxin] + 2 S-adenosyl-L-methionine + 4 H(+) = [[Fe-S] cluster scaffold protein] + N(6)-[(R)-dihydrolipoyl]-L-lysyl-[protein] + 4 Fe(3+) + 2 hydrogen sulfide + 2 5'-deoxyadenosine + 2 L-methionine + 2 reduced [2Fe-2S]-[ferredoxin]. It functions in the pathway protein modification; protein lipoylation via endogenous pathway; protein N(6)-(lipoyl)lysine from octanoyl-[acyl-carrier-protein]: step 2/2. In terms of biological role, catalyzes the radical-mediated insertion of two sulfur atoms into the C-6 and C-8 positions of the octanoyl moiety bound to the lipoyl domains of lipoate-dependent enzymes, thereby converting the octanoylated domains into lipoylated derivatives. This chain is Lipoyl synthase, found in Gluconobacter oxydans (strain 621H) (Gluconobacter suboxydans).